A 521-amino-acid chain; its full sequence is Protein disulfide-isomerase A5 (521 aa).

An N-terminal signal peptide occupies residues 1–25 (MARVVPAWLLLPLAVWVVLPTWLSS). 3 consecutive Thioredoxin domains span residues 136–263 (FLKD…NPQP), 274–386 (ADEG…NPES), and 387–508 (PPPP…TLRE). 3 disulfides stabilise this stretch: Cys184-Cys187, Cys307-Cys310, and Cys428-Cys431. The short motif at 518-521 (KEEL) is the Prevents secretion from ER element.

It belongs to the protein disulfide isomerase family.

It is found in the endoplasmic reticulum lumen. The enzyme catalyses Catalyzes the rearrangement of -S-S- bonds in proteins.. The polypeptide is Protein disulfide-isomerase A5 (PDIA5) (Bos taurus (Bovine)).